A 246-amino-acid chain; its full sequence is MKRKQESKGAGEKRQGAGGRGQGEKKQGKQGRQGRQGRQGEKSPVPSPQSPIPNPQFTTPNPDEWLQIGKIVSAQGLSGEVRVYPDSDFPERFEVPGTRWLLRPGQTEPQPIELLHGRYLENKNLYVLQLAGVENRSQSEELRGCMLFVPASDRPELGEDEYHVVDLIGMEVFLQASGDLVGAVVDVIPAGNDLLEVSLHEPVTSDKKPKTVLIPFVKAIAPVVDLQTRRIEITPPPGLLELGSGV.

The span at 1 to 15 (MKRKQESKGAGEKRQ) shows a compositional bias: basic and acidic residues. The segment at 1 to 63 (MKRKQESKGA…NPQFTTPNPD (63 aa)) is disordered. A compositionally biased stretch (pro residues) spans 45 to 54 (VPSPQSPIPN). One can recognise a PRC barrel domain in the interval 158–239 (GEDEYHVVDL…RIEITPPPGL (82 aa)).

This sequence belongs to the RimM family. In terms of assembly, binds ribosomal protein uS19.

The protein resides in the cytoplasm. Functionally, an accessory protein needed during the final step in the assembly of 30S ribosomal subunit, possibly for assembly of the head region. Essential for efficient processing of 16S rRNA. May be needed both before and after RbfA during the maturation of 16S rRNA. It has affinity for free ribosomal 30S subunits but not for 70S ribosomes. In Nostoc sp. (strain PCC 7120 / SAG 25.82 / UTEX 2576), this protein is Ribosome maturation factor RimM.